We begin with the raw amino-acid sequence, 203 residues long: Probable nicotinate-nucleotide adenylyltransferase (203 aa).

Belongs to the NadD family.

The catalysed reaction is nicotinate beta-D-ribonucleotide + ATP + H(+) = deamido-NAD(+) + diphosphate. Its pathway is cofactor biosynthesis; NAD(+) biosynthesis; deamido-NAD(+) from nicotinate D-ribonucleotide: step 1/1. Its function is as follows. Catalyzes the reversible adenylation of nicotinate mononucleotide (NaMN) to nicotinic acid adenine dinucleotide (NaAD). The chain is Probable nicotinate-nucleotide adenylyltransferase from Clostridium kluyveri (strain ATCC 8527 / DSM 555 / NBRC 12016 / NCIMB 10680 / K1).